The following is a 102-amino-acid chain: RNA-binding protein Hfq (102 aa).

In terms of domain architecture, Sm spans 9–68 (DPFLNALRRERVPVSIYLVNGIKLQGQIESFDQFVILLKNTVSQMVYKHAISTVVPSRPV). The segment at 63-102 (VPSRPVSHHSNNTGGGSNNYHHGSSPAPSSQPQQDSADAE) is disordered. Low complexity predominate over residues 70 to 102 (HHSNNTGGGSNNYHHGSSPAPSSQPQQDSADAE).

Belongs to the Hfq family. Homohexamer.

In terms of biological role, RNA chaperone that binds small regulatory RNA (sRNAs) and mRNAs to facilitate mRNA translational regulation in response to envelope stress, environmental stress and changes in metabolite concentrations. Also binds with high specificity to tRNAs. This chain is RNA-binding protein Hfq, found in Erwinia tasmaniensis (strain DSM 17950 / CFBP 7177 / CIP 109463 / NCPPB 4357 / Et1/99).